The following is a 568-amino-acid chain: 2-succinyl-5-enolpyruvyl-6-hydroxy-3-cyclohexene-1-carboxylate synthase (568 aa).

The protein belongs to the TPP enzyme family. MenD subfamily. As to quaternary structure, homodimer. It depends on Mg(2+) as a cofactor. Mn(2+) is required as a cofactor. The cofactor is thiamine diphosphate.

It carries out the reaction isochorismate + 2-oxoglutarate + H(+) = 5-enolpyruvoyl-6-hydroxy-2-succinyl-cyclohex-3-ene-1-carboxylate + CO2. It functions in the pathway quinol/quinone metabolism; 1,4-dihydroxy-2-naphthoate biosynthesis; 1,4-dihydroxy-2-naphthoate from chorismate: step 2/7. It participates in quinol/quinone metabolism; menaquinone biosynthesis. Functionally, catalyzes the thiamine diphosphate-dependent decarboxylation of 2-oxoglutarate and the subsequent addition of the resulting succinic semialdehyde-thiamine pyrophosphate anion to isochorismate to yield 2-succinyl-5-enolpyruvyl-6-hydroxy-3-cyclohexene-1-carboxylate (SEPHCHC). The polypeptide is 2-succinyl-5-enolpyruvyl-6-hydroxy-3-cyclohexene-1-carboxylate synthase (Actinobacillus pleuropneumoniae serotype 3 (strain JL03)).